The sequence spans 371 residues: Bifunctional enzyme IspD/IspF (371 aa).

The 2-C-methyl-D-erythritol 4-phosphate cytidylyltransferase stretch occupies residues 1–210 (MSEMSLIMLA…LNLPTPSFEI (210 aa)). Positions 211-371 (FTGNGFDVHE…NLKYFDWTRL (161 aa)) are 2-C-methyl-D-erythritol 2,4-cyclodiphosphate synthase. Aspartate 217 and histidine 219 together coordinate a divalent metal cation. 4-CDP-2-C-methyl-D-erythritol 2-phosphate-binding positions include 217–219 (DVH) and 243–244 (HS). Histidine 251 is an a divalent metal cation binding site. 4-CDP-2-C-methyl-D-erythritol 2-phosphate contacts are provided by residues 265–267 (DIG), 270–274 (YPDTD), 341–344 (TTTE), phenylalanine 348, and arginine 351.

In the N-terminal section; belongs to the IspD/TarI cytidylyltransferase family. IspD subfamily. This sequence in the C-terminal section; belongs to the IspF family. A divalent metal cation is required as a cofactor.

The enzyme catalyses 2-C-methyl-D-erythritol 4-phosphate + CTP + H(+) = 4-CDP-2-C-methyl-D-erythritol + diphosphate. The catalysed reaction is 4-CDP-2-C-methyl-D-erythritol 2-phosphate = 2-C-methyl-D-erythritol 2,4-cyclic diphosphate + CMP. It functions in the pathway isoprenoid biosynthesis; isopentenyl diphosphate biosynthesis via DXP pathway; isopentenyl diphosphate from 1-deoxy-D-xylulose 5-phosphate: step 2/6. The protein operates within isoprenoid biosynthesis; isopentenyl diphosphate biosynthesis via DXP pathway; isopentenyl diphosphate from 1-deoxy-D-xylulose 5-phosphate: step 4/6. Bifunctional enzyme that catalyzes the formation of 4-diphosphocytidyl-2-C-methyl-D-erythritol from CTP and 2-C-methyl-D-erythritol 4-phosphate (MEP) (IspD), and catalyzes the conversion of 4-diphosphocytidyl-2-C-methyl-D-erythritol 2-phosphate (CDP-ME2P) to 2-C-methyl-D-erythritol 2,4-cyclodiphosphate (ME-CPP) with a corresponding release of cytidine 5-monophosphate (CMP) (IspF). In Campylobacter jejuni (strain RM1221), this protein is Bifunctional enzyme IspD/IspF.